The following is a 289-amino-acid chain: Aquaporin PIP1-2 (289 aa).

Residues 1–36 are disordered; the sequence is MEGKEEDVRLGANKFSERQPIGTAAQGAADDKDYKE. A run of 2 helical transmembrane segments spans residues 58–78 and 93–115; these read IAEF…VMGV and IAWS…SGGH. An NPA 1 motif is present at residues 117 to 119; that stretch reads NPA. A run of 3 helical transmembrane segments spans residues 136–156, 178–198, and 212–232; these read LFYI…VKGF, GDGL…VFSA, and ILAP…TIPI. An NPA 2 motif is present at residues 238-240; sequence NPA. A helical transmembrane segment spans residues 260–280; the sequence is IFWVGPFIGAALAAIYHQVII.

The protein belongs to the MIP/aquaporin (TC 1.A.8) family. PIP (TC 1.A.8.11) subfamily. In terms of assembly, interacts with PIP2-1 to form heteromers. As to expression, highly expressed in developing tassels and at lower levels in roots, shoots, ears and embryos. Expressed in the root growing zone at 5-6 mm from the root tip. Expressed in xylem parenchyma.

It is found in the cell membrane. In terms of biological role, water channel required to facilitate the transport of water across cell membrane. Active as heteromers with PIP1-1, PIP2-1, PIP2-4 or PIP2-5, but not as homomers. This chain is Aquaporin PIP1-2 (PIP1-2), found in Zea mays (Maize).